We begin with the raw amino-acid sequence, 220 residues long: UPF0711 protein C18orf21 (220 aa).

A disordered region spans residues 117-181 (SRSFVSTLKS…VSTCSSKNTS (65 aa)). Polar residues predominate over residues 119–136 (SFVSTLKSNPATPTSKLS). Ser-126 is subject to Phosphoserine. A phosphothreonine mark is found at Thr-130 and Thr-139. Positions 171–180 (SVSTCSSKNT) are enriched in low complexity.

The protein belongs to the UPF0711 family.

This Homo sapiens (Human) protein is UPF0711 protein C18orf21 (C18orf21).